The chain runs to 261 residues: Cytochrome c oxidase subunit 2 (261 aa).

The Mitochondrial intermembrane portion of the chain corresponds to 1 to 34 (MSFTGIFHFFTNSPCDAAEPWQLGSQDAATPMMQ). The chain crosses the membrane as a helical span at residues 35-55 (GIIDLHHDIFFFLILILVFVS). The Mitochondrial matrix portion of the chain corresponds to 56 to 87 (RILVRALWHFHSKKNPIPQRIVHGTTIEILRT). Residues 88-108 (IFPSIIPMFIAIPSFALLYSM) form a helical membrane-spanning segment. Residues 109-261 (DEVVVDPAMT…NQLIPQTGEA (153 aa)) are Mitochondrial intermembrane-facing. 5 residues coordinate Cu cation: histidine 188, cysteine 223, glutamate 225, cysteine 227, and histidine 231. Residue glutamate 225 coordinates Mg(2+).

It belongs to the cytochrome c oxidase subunit 2 family. In terms of assembly, component of the cytochrome c oxidase (complex IV, CIV), a multisubunit enzyme composed of a catalytic core of 3 subunits and several supernumerary subunits. The complex exists as a monomer or a dimer and forms supercomplexes (SCs) in the inner mitochondrial membrane with ubiquinol-cytochrome c oxidoreductase (cytochrome b-c1 complex, complex III, CIII). Cu cation is required as a cofactor.

The protein localises to the mitochondrion inner membrane. It catalyses the reaction 4 Fe(II)-[cytochrome c] + O2 + 8 H(+)(in) = 4 Fe(III)-[cytochrome c] + 2 H2O + 4 H(+)(out). Component of the cytochrome c oxidase, the last enzyme in the mitochondrial electron transport chain which drives oxidative phosphorylation. The respiratory chain contains 3 multisubunit complexes succinate dehydrogenase (complex II, CII), ubiquinol-cytochrome c oxidoreductase (cytochrome b-c1 complex, complex III, CIII) and cytochrome c oxidase (complex IV, CIV), that cooperate to transfer electrons derived from NADH and succinate to molecular oxygen, creating an electrochemical gradient over the inner membrane that drives transmembrane transport and the ATP synthase. Cytochrome c oxidase is the component of the respiratory chain that catalyzes the reduction of oxygen to water. Electrons originating from reduced cytochrome c in the intermembrane space (IMS) are transferred via the dinuclear copper A center (CU(A)) of subunit 2 and heme A of subunit 1 to the active site in subunit 1, a binuclear center (BNC) formed by heme A3 and copper B (CU(B)). The BNC reduces molecular oxygen to 2 water molecules using 4 electrons from cytochrome c in the IMS and 4 protons from the mitochondrial matrix. The protein is Cytochrome c oxidase subunit 2 (COX2) of Daucus carota (Wild carrot).